A 331-amino-acid polypeptide reads, in one-letter code: Pseudouridylate synthase TRUB2, mitochondrial (331 aa).

Asp98 acts as the Nucleophile in catalysis. The interval 309–331 (STGQPWGLKDPSSTLELESCSGQ) is disordered. Residues 319–331 (PSSTLELESCSGQ) show a composition bias toward polar residues.

This sequence belongs to the pseudouridine synthase TruB family. As to quaternary structure, forms a regulatory protein-RNA complex, consisting of RCC1L, NGRN, RPUSD3, RPUSD4, TRUB2, FASTKD2 and 16S mt-rRNA.

It is found in the mitochondrion matrix. It catalyses the reaction a uridine in mRNA = a pseudouridine in mRNA. The enzyme catalyses uridine(55) in tRNA = pseudouridine(55) in tRNA. In terms of biological role, minor enzyme contributing to the isomerization of uridine to pseudouridine (pseudouridylation) of specific mitochondrial mRNAs (mt-mRNAs) such as COXI and COXIII mt-mRNAs. As a component of a functional protein-RNA module, consisting of RCC1L, NGRN, RPUSD3, RPUSD4, TRUB2, FASTKD2 and 16S mitochondrial ribosomal RNA (16S mt-rRNA), controls 16S mt-rRNA abundance and is required for intra-mitochondrial translation. Also catalyzes pseudouridylation of some tRNAs, including synthesis of pseudouridine(55) from uracil-55, in the psi GC loop of a subset of tRNAs. This chain is Pseudouridylate synthase TRUB2, mitochondrial, found in Mus musculus (Mouse).